The sequence spans 248 residues: Small ribosomal subunit protein uS2 (248 aa).

The protein belongs to the universal ribosomal protein uS2 family.

This is Small ribosomal subunit protein uS2 from Janthinobacterium sp. (strain Marseille) (Minibacterium massiliensis).